A 254-amino-acid polypeptide reads, in one-letter code: Glutamate racemase (254 aa).

Residues 7–8 (DS) and 39–40 (YG) contribute to the substrate site. The active-site Proton donor/acceptor is C70. Substrate is bound by residues 71–72 (NT) and E147. C178 (proton donor/acceptor) is an active-site residue. Position 179-180 (179-180 (TH)) interacts with substrate.

Belongs to the aspartate/glutamate racemases family. Homodimer.

The enzyme catalyses L-glutamate = D-glutamate. It functions in the pathway cell wall biogenesis; peptidoglycan biosynthesis. In terms of biological role, provides the (R)-glutamate required for cell wall biosynthesis. Converts L- or D-glutamate to D- or L-glutamate, respectively, but not other amino acids such as alanine, aspartate, and glutamine. This chain is Glutamate racemase, found in Aquifex pyrophilus.